Reading from the N-terminus, the 217-residue chain is Probable transaldolase (217 aa).

Residue Lys-83 is the Schiff-base intermediate with substrate of the active site.

This sequence belongs to the transaldolase family. Type 3B subfamily.

The protein resides in the cytoplasm. It carries out the reaction D-sedoheptulose 7-phosphate + D-glyceraldehyde 3-phosphate = D-erythrose 4-phosphate + beta-D-fructose 6-phosphate. Its pathway is carbohydrate degradation; pentose phosphate pathway; D-glyceraldehyde 3-phosphate and beta-D-fructose 6-phosphate from D-ribose 5-phosphate and D-xylulose 5-phosphate (non-oxidative stage): step 2/3. Transaldolase is important for the balance of metabolites in the pentose-phosphate pathway. This Anaeromyxobacter sp. (strain K) protein is Probable transaldolase.